Reading from the N-terminus, the 308-residue chain is N-acetyl-gamma-glutamyl-phosphate reductase (308 aa).

The active site involves Cys-117.

The protein belongs to the NAGSA dehydrogenase family. Type 2 subfamily.

It localises to the cytoplasm. The catalysed reaction is N-acetyl-L-glutamate 5-semialdehyde + phosphate + NADP(+) = N-acetyl-L-glutamyl 5-phosphate + NADPH + H(+). It functions in the pathway amino-acid biosynthesis; L-arginine biosynthesis; N(2)-acetyl-L-ornithine from L-glutamate: step 3/4. Functionally, catalyzes the NADPH-dependent reduction of N-acetyl-5-glutamyl phosphate to yield N-acetyl-L-glutamate 5-semialdehyde. The chain is N-acetyl-gamma-glutamyl-phosphate reductase from Sinorhizobium fredii (strain NBRC 101917 / NGR234).